A 537-amino-acid chain; its full sequence is CTP synthase (537 aa).

Positions 1–268 are amidoligase domain; it reads MSFKCIFLTG…STFITEKLGL (268 aa). Ser-14 contributes to the CTP binding site. Ser-14 is a binding site for UTP. 15 to 20 contacts ATP; that stretch reads SLGKGL. Tyr-55 lines the L-glutamine pocket. Asp-72 provides a ligand contact to ATP. Asp-72 and Glu-142 together coordinate Mg(2+). CTP-binding positions include 149–151, 188–193, and Lys-224; these read DIE and KTKPTQ. Residues 188–193 and Lys-224 contribute to the UTP site; that span reads KTKPTQ. Residues 294–533 enclose the Glutamine amidotransferase type-1 domain; that stretch reads RLGLVGKYVQ…IEAALLHSRN (240 aa). Gly-353 is a binding site for L-glutamine. Cys-380 serves as the catalytic Nucleophile; for glutamine hydrolysis. Residues 381–384, Glu-404, and Arg-461 contribute to the L-glutamine site; that span reads LGMQ. Residues His-506 and Glu-508 contribute to the active site.

Belongs to the CTP synthase family. As to quaternary structure, homotetramer.

It carries out the reaction UTP + L-glutamine + ATP + H2O = CTP + L-glutamate + ADP + phosphate + 2 H(+). The enzyme catalyses L-glutamine + H2O = L-glutamate + NH4(+). The catalysed reaction is UTP + NH4(+) + ATP = CTP + ADP + phosphate + 2 H(+). Its pathway is pyrimidine metabolism; CTP biosynthesis via de novo pathway; CTP from UDP: step 2/2. Its activity is regulated as follows. Allosterically activated by GTP, when glutamine is the substrate; GTP has no effect on the reaction when ammonia is the substrate. The allosteric effector GTP functions by stabilizing the protein conformation that binds the tetrahedral intermediate(s) formed during glutamine hydrolysis. Inhibited by the product CTP, via allosteric rather than competitive inhibition. In terms of biological role, catalyzes the ATP-dependent amination of UTP to CTP with either L-glutamine or ammonia as the source of nitrogen. Regulates intracellular CTP levels through interactions with the four ribonucleotide triphosphates. The polypeptide is CTP synthase (Chlamydia abortus (strain DSM 27085 / S26/3) (Chlamydophila abortus)).